Here is a 279-residue protein sequence, read N- to C-terminus: MAQIGHNISLPERARRIRRHALRMGEVQGQGYIAQALGIADVLAVAYFHATTYRPDDPEWEGRDRFLLSIGHYAIALYAALIEAKIIPEDELETYGADDSRLPMSGMAAYTPGMEITGGSLGHGLGIAVGMSLALKRKGSRSFVYNLFSDGELDEGSTWEAAMSAGSYKLDNLIGIVDVNQMQADGPSLGVLNFEPLGPKFEAFGWYVQRIDGNDIDALVDAFDNARQHRHPQPRIIICDTKMAKGVPFLEARERNHFLRVEPQEWAEAIRIIDAGVTA.

Helical transmembrane passes span 31–51 (GYIA…FHAT), 67–87 (LLSI…AKII), and 115–135 (EITG…SLAL).

This sequence belongs to the transketolase family. Requires thiamine diphosphate as cofactor.

The protein localises to the cell membrane. This is an uncharacterized protein from Sinorhizobium fredii (strain NBRC 101917 / NGR234).